Here is a 61-residue protein sequence, read N- to C-terminus: MVCIHTENQNQGGFYPFVLLEISVLHEPPLGHLRYRLTDVPPQPNSPPDNVFNPDQPRMGP.

Positions 36 to 61 (RLTDVPPQPNSPPDNVFNPDQPRMGP) are disordered.

It belongs to the ART2/RRT15 family.

This is an uncharacterized protein from Saccharomyces cerevisiae (strain ATCC 204508 / S288c) (Baker's yeast).